Here is a 197-residue protein sequence, read N- to C-terminus: Rac-like GTP-binding protein RAC1 (197 aa).

13–20 (GDGAVGKT) serves as a coordination point for GTP. The short motif at 35-43 (YVPTVFDNF) is the Effector region element. GTP-binding positions include 60-64 (DTAGQ) and 118-121 (TKLD). Cysteine 194 carries the post-translational modification Cysteine methyl ester. Cysteine 194 is lipidated: S-geranylgeranyl cysteine. Residues 195–197 (SIL) constitute a propeptide, removed in mature form.

The protein belongs to the small GTPase superfamily. Rho family.

The protein resides in the cytoplasm. Its subcellular location is the membrane. Its function is as follows. Inactive GDP-bound Rho GTPases reside in the cytosol, are found in a complex with Rho GDP-dissociation inhibitors (Rho GDIs), and are released from the GDI protein in order to translocate to membranes upon activation. This Lotus japonicus (Lotus corniculatus var. japonicus) protein is Rac-like GTP-binding protein RAC1 (RAC1).